Consider the following 297-residue polypeptide: MKKGKMIIISGPSGVGKGSVNGELLQNPDLRLKYSVSMTTRKPRNGEINGVNYFFVSNEEFAKAIVNDELIEYAHFVGNSYGTPRKYVEQELKKGNNVILEIEVDGATQVLNKEANVLSIFLMPPNLTELANRIRGRQTEDEEKIKARLDKALLEIPLKHNYQYVIENDNVANAVAKITDVLHLEGLTDIKTPTVYERLEQIVEQIVKEKYMYFVNNWETNVKLLAKNEEEKNKAKNFDAETYLIKLLTKKVYHKVLGHGDFSKLLDKDFVDFKIQKLMFKINFFSVEQKHYNNDEF.

One can recognise a Guanylate kinase-like domain in the interval 4–183 (GKMIIISGPS…AVAKITDVLH (180 aa)). Residue 11 to 18 (GPSGVGKG) coordinates ATP. The segment at 204-297 (EQIVKEKYMY…EQKHYNNDEF (94 aa)) is unknown.

This sequence belongs to the guanylate kinase family.

It localises to the cytoplasm. The catalysed reaction is GMP + ATP = GDP + ADP. Functionally, essential for recycling GMP and indirectly, cGMP. The polypeptide is Guanylate kinase (gmk) (Mycoplasma capricolum subsp. capricolum (strain California kid / ATCC 27343 / NCTC 10154)).